A 245-amino-acid polypeptide reads, in one-letter code: Retrovirus-related Pol polyprotein from type-1 retrotransposable element R1 (245 aa).

The Reverse transcriptase domain maps to 1–105; the sequence is LKDGTGIVAA…VDLETYCNKA (105 aa). The nucleic acid-binding endonuclease stretch occupies residues 106 to 245; that stretch reads EVRQKFREKE…IVRDDSNLEQ (140 aa).

The catalysed reaction is DNA(n) + a 2'-deoxyribonucleoside 5'-triphosphate = DNA(n+1) + diphosphate. This chain is Retrovirus-related Pol polyprotein from type-1 retrotransposable element R1, found in Popillia japonica (Japanese beetle).